Reading from the N-terminus, the 216-residue chain is Capsule polysaccharide export ATP-binding protein CtrD (216 aa).

Residues 2-215 form the ABC transporter domain; the sequence is ISVEHVSKRY…DKAYEYYNSL (214 aa). 38-45 is a binding site for ATP; sequence GRNGAGKS.

The protein belongs to the ABC transporter superfamily.

The protein resides in the cell inner membrane. The catalysed reaction is ATP + H2O + capsular polysaccharide-[capsular polysaccharide-binding protein]Side 1 = ADP + phosphate + capsular polysaccharideSide 2 + [capsular polysaccharide-binding protein]Side 1.. Putative ATP-binding protein, and an energy-coupling component of capsule polysaccharide export apparatus. This Neisseria meningitidis serogroup B (strain ATCC BAA-335 / MC58) protein is Capsule polysaccharide export ATP-binding protein CtrD (ctrD).